A 368-amino-acid chain; its full sequence is C-glycoside deglycosidase alpha subunit (368 aa).

Residue E145 coordinates a divalent metal cation. Residue H147 is the Proton acceptor of the active site. The a divalent metal cation site is built by D177, H275, and E311.

The protein belongs to the C-glycoside deglycosidase alpha subunit family. Heterodimer composed of an alpha subunit (CarB) and a beta subunit (CarC). A divalent metal cation is required as a cofactor.

It carries out the reaction 3''-dehydroisovitexin = 1,5-anhydro-D-erythro-hex-1-en-3-ulose + apigenin. The enzyme catalyses 3''-dehydroisoorientin = 1,5-anhydro-D-erythro-hex-1-en-3-ulose + luteolin. Functionally, carbon-carbon bond-cleaving enzyme which participates in the metabolism of C-glycosides. Acts on the C6-glycosylated compounds 3''-dehydroisovitexin (3''-oxo-isovitexin) and 3''-dehydroisoorientin (3''-oxo-homoorientin). Shows weak activity with 3'-dehydromangiferin (3'-oxo-mangiferin). The protein is C-glycoside deglycosidase alpha subunit of Microbacterium trichothecenolyticum (Aureobacterium trichothecenolyticum).